The following is a 752-amino-acid chain: Multifunctional tryptophan biosynthesis protein (752 aa).

A Glutamine amidotransferase type-1 domain is found at 23–223 (NVILIDNYDS…LELTAGTWDN (201 aa)). 74–76 (GPG) serves as a coordination point for L-glutamine. C102 serves as the catalytic Nucleophile; for GATase activity. L-glutamine-binding positions include Q106 and 152 to 153 (SL). Catalysis depends on for GATase activity residues H197 and E199. An indole-3-glycerol phosphate synthase region spans residues 239-503 (ILDKIYAHRK…DTSAFVAQLL (265 aa)). The tract at residues 519–752 (LVKICGTRTE…FVKSAKSIRQ (234 aa)) is N-(5'-phosphoribosyl)anthranilate isomerase.

It carries out the reaction N-(5-phospho-beta-D-ribosyl)anthranilate = 1-(2-carboxyphenylamino)-1-deoxy-D-ribulose 5-phosphate. The catalysed reaction is 1-(2-carboxyphenylamino)-1-deoxy-D-ribulose 5-phosphate + H(+) = (1S,2R)-1-C-(indol-3-yl)glycerol 3-phosphate + CO2 + H2O. It catalyses the reaction chorismate + L-glutamine = anthranilate + pyruvate + L-glutamate + H(+). The protein operates within amino-acid biosynthesis; L-tryptophan biosynthesis; L-tryptophan from chorismate: step 1/5. It participates in amino-acid biosynthesis; L-tryptophan biosynthesis; L-tryptophan from chorismate: step 3/5. Its pathway is amino-acid biosynthesis; L-tryptophan biosynthesis; L-tryptophan from chorismate: step 4/5. Its function is as follows. Trifunctional enzyme bearing the Gln amidotransferase (GATase) domain of anthranilate synthase, indole-glycerolphosphate synthase, and phosphoribosylanthranilate isomerase activities. The sequence is that of Multifunctional tryptophan biosynthesis protein (trpC) from Penicillium chrysogenum (Penicillium notatum).